The chain runs to 194 residues: Fe/S biogenesis protein NfuA (194 aa).

Cys-152 and Cys-155 together coordinate [4Fe-4S] cluster.

Belongs to the NfuA family. Homodimer. [4Fe-4S] cluster serves as cofactor.

Functionally, involved in iron-sulfur cluster biogenesis. Binds a 4Fe-4S cluster, can transfer this cluster to apoproteins, and thereby intervenes in the maturation of Fe/S proteins. Could also act as a scaffold/chaperone for damaged Fe/S proteins. The chain is Fe/S biogenesis protein NfuA from Pseudomonas entomophila (strain L48).